The sequence spans 111 residues: Large ribosomal subunit protein uL23 (111 aa).

The protein belongs to the universal ribosomal protein uL23 family. As to quaternary structure, part of the 50S ribosomal subunit. Contacts protein L29, and trigger factor when it is bound to the ribosome.

One of the early assembly proteins it binds 23S rRNA. One of the proteins that surrounds the polypeptide exit tunnel on the outside of the ribosome. Forms the main docking site for trigger factor binding to the ribosome. The sequence is that of Large ribosomal subunit protein uL23 from Chlamydia caviae (strain ATCC VR-813 / DSM 19441 / 03DC25 / GPIC) (Chlamydophila caviae).